The chain runs to 37 residues: Large ribosomal subunit protein bL36c (37 aa).

Belongs to the bacterial ribosomal protein bL36 family.

Its subcellular location is the plastid. The protein localises to the chloroplast. This is Large ribosomal subunit protein bL36c from Lepidium virginicum (Virginia pepperweed).